A 165-amino-acid chain; its full sequence is MDGTSTDTSAQQAEGRTVDIAGIMRAIPHRYPFLLIDRVVELVPNVSAIGVKNVSVNESFFQGHFPGHPVMPGVLIIESMAQTAAVLVVETLGPEEAGKVVYFMSVEGAKFRRPVVPGDVLRIHVAKERNRGNVWKFNAVARVDGVAVAEATYAAMIMDKKAGEG.

The active site involves His64.

It belongs to the thioester dehydratase family. FabZ subfamily.

Its subcellular location is the cytoplasm. The catalysed reaction is a (3R)-hydroxyacyl-[ACP] = a (2E)-enoyl-[ACP] + H2O. Its function is as follows. Involved in unsaturated fatty acids biosynthesis. Catalyzes the dehydration of short chain beta-hydroxyacyl-ACPs and long chain saturated and unsaturated beta-hydroxyacyl-ACPs. The polypeptide is 3-hydroxyacyl-[acyl-carrier-protein] dehydratase FabZ (Acidiphilium cryptum (strain JF-5)).